The chain runs to 104 residues: Large ribosomal subunit protein bL21 (104 aa).

The protein belongs to the bacterial ribosomal protein bL21 family. As to quaternary structure, part of the 50S ribosomal subunit. Contacts protein L20.

Functionally, this protein binds to 23S rRNA in the presence of protein L20. This chain is Large ribosomal subunit protein bL21, found in Allorhizobium ampelinum (strain ATCC BAA-846 / DSM 112012 / S4) (Agrobacterium vitis (strain S4)).